Consider the following 506-residue polypeptide: Carboxypeptidase Y homolog ARB_06361 (506 aa).

The first 15 residues, 1–15 (MHVAILLAIISLARA), serve as a signal peptide directing secretion. Residue asparagine 108 is glycosylated (N-linked (GlcNAc...) asparagine). The active site involves serine 179. N-linked (GlcNAc...) asparagine glycosylation is found at asparagine 280, asparagine 316, and asparagine 349. Aspartate 427 is an active-site residue. Residue asparagine 441 is glycosylated (N-linked (GlcNAc...) asparagine). Histidine 485 is an active-site residue.

The protein belongs to the peptidase S10 family.

It is found in the secreted. The catalysed reaction is Release of a C-terminal amino acid with broad specificity.. Functionally, involved in degradation of small peptides. The sequence is that of Carboxypeptidase Y homolog ARB_06361 from Arthroderma benhamiae (strain ATCC MYA-4681 / CBS 112371) (Trichophyton mentagrophytes).